A 682-amino-acid chain; its full sequence is Acyl-CoA synthetase short-chain family member 3, mitochondrial (682 aa).

The transit peptide at 1–29 (MKPSWLQCRKVTGAGTLGAPLPGSPSVRG) directs the protein to the mitochondrion. A CoA-binding site is contributed by 222 to 225 (EPGR). ATP is bound by residues 420 to 422 (GER) and 441 to 446 (DHWWQT). Residue lysine 513 is modified to N6-succinyllysine. Position 519 is an N6-acetyllysine (lysine 519). Aspartate 534, arginine 549, and arginine 560 together coordinate ATP. Residue arginine 619 participates in CoA binding.

Belongs to the ATP-dependent AMP-binding enzyme family.

The protein localises to the mitochondrion matrix. The catalysed reaction is acetate + ATP + CoA = acetyl-CoA + AMP + diphosphate. The enzyme catalyses propanoate + ATP + CoA = propanoyl-CoA + AMP + diphosphate. It carries out the reaction butanoate + ATP + CoA = butanoyl-CoA + AMP + diphosphate. In terms of biological role, catalyzes the synthesis of acetyl-CoA from short-chain fatty acids. Propionate is the preferred substrate but can also utilize acetate and butyrate with a much lower affinity. The chain is Acyl-CoA synthetase short-chain family member 3, mitochondrial (Acss3) from Mus musculus (Mouse).